A 319-amino-acid polypeptide reads, in one-letter code: COP9 signalosome complex subunit 6 (319 aa).

In terms of domain architecture, MPN spans 33 to 166 (VALHPLVILN…VSVYESVIDI (134 aa)).

The protein belongs to the peptidase M67A family. CSN6 subfamily. As to quaternary structure, component of the CSN complex, probably composed of cops1, cops2, cops3, cops4, cops5, cops6, cops7, cops8 and cops9.

Its subcellular location is the cytoplasm. It is found in the nucleus. Component of the COP9 signalosome complex (CSN), a complex involved in various cellular and developmental processes. The CSN complex is an essential regulator of the ubiquitin (Ubl) conjugation pathway by mediating the deneddylation of the cullin subunits of E3 ligase complexes, leading to modify the Ubl ligase activity. The protein is COP9 signalosome complex subunit 6 (cops6) of Xenopus tropicalis (Western clawed frog).